The following is a 274-amino-acid chain: Penicillin-insensitive murein endopeptidase (274 aa).

The first 19 residues, 1-19 (MKKTAIALLAWFVSSASLA), serve as a signal peptide directing secretion. 3 cysteine pairs are disulfide-bonded: Cys-44–Cys-265, Cys-187–Cys-235, and Cys-216–Cys-223. His-110, His-113, Asp-120, Asp-147, His-150, and His-211 together coordinate Zn(2+). The interval 225 to 274 (DQPLPPPGDGCGAELQSWFEPPKPGTTKPEKKTPPPLPPSCQALLDEHVL) is disordered.

Belongs to the peptidase M74 family. As to quaternary structure, dimer. Zn(2+) serves as cofactor.

The protein localises to the periplasm. In terms of biological role, murein endopeptidase that cleaves the D-alanyl-meso-2,6-diamino-pimelyl amide bond that connects peptidoglycan strands. Likely plays a role in the removal of murein from the sacculus. This Salmonella agona (strain SL483) protein is Penicillin-insensitive murein endopeptidase.